Reading from the N-terminus, the 302-residue chain is Olfactory receptor 51H1 (302 aa).

At 1 to 27 the chain is on the extracellular side; sequence MTNLNASQANHRNFILTGIPGTPDKNP. Residue Asn-5 is glycosylated (N-linked (GlcNAc...) asparagine). Residues 28-48 form a helical membrane-spanning segment; it reads WLAFPLGFLYTLTLLGNGTIL. The Cytoplasmic segment spans residues 49–56; sequence AVIKVEPS. Residues 57 to 77 traverse the membrane as a helical segment; the sequence is LHEPTYYFLSILALTDVSLSM. At 78-101 the chain is on the extracellular side; the sequence is STLPSMLSIYWFNAPQIVFDACIM. Cys-99 and Cys-191 are joined by a disulfide. Residues 102 to 122 form a helical membrane-spanning segment; it reads QMFFIHVFGIVESGVLVSMAF. Over 123-141 the chain is Cytoplasmic; that stretch reads DRFVAIRNPLHYVSILTHD. The chain crosses the membrane as a helical span at residues 142-162; sequence VIRKTGIAVLTRAVCVVFPVP. The Extracellular portion of the chain corresponds to 163–198; that stretch reads FLIKCLPFCHSNVLSHSYCLHQNMMRLACASTRINS. A helical transmembrane segment spans residues 199 to 219; sequence LYGLIVVIFTLGLDVLLTLLS. Over 220–239 the chain is Cytoplasmic; sequence YVLTLKTVLGIVSRGERLKT. Residues 240–260 traverse the membrane as a helical segment; sequence LSTCLSHMSTVLLFYVPFMGA. At 261–276 the chain is on the extracellular side; that stretch reads ASMIHRFWEHLSPVVH. The helical transmembrane segment at 277–297 threads the bilayer; the sequence is MVMADIYLLLPPVLNPIVYSV. The Cytoplasmic portion of the chain corresponds to 298–302; it reads KTKQI.

This sequence belongs to the G-protein coupled receptor 1 family.

It is found in the cell membrane. Odorant receptor. This Homo sapiens (Human) protein is Olfactory receptor 51H1 (OR51H1).